The following is a 402-amino-acid chain: Putative PDZ domain-containing protein PDZK1P1 (402 aa).

PDZ domains are found at residues 12–93 and 121–206; these read RLCY…VDKE and IVEM…VDKE. The segment at 230 to 258 is disordered; the sequence is GSVKEAPAPTPTSLEVSSPPDTTEEEDHK. Polar residues predominate over residues 240-250; sequence PTSLEVSSPPD. The region spanning 261-341 is the PDZ 3 domain; that stretch reads LCRLAKGENG…NVTLLVCGKK (81 aa). The segment at 362–402 is disordered; sequence DTPPDSKEGIVVESKHDSHMAKERAHSTASHSSSNSEDTEM. Over residues 365 to 387 the composition is skewed to basic and acidic residues; it reads PDSKEGIVVESKHDSHMAKERAH. Low complexity predominate over residues 388-402; that stretch reads STASHSSSNSEDTEM.

Belongs to the NHER family.

In Homo sapiens (Human), this protein is Putative PDZ domain-containing protein PDZK1P1.